Consider the following 279-residue polypeptide: Putative phosphoenolpyruvate synthase regulatory protein (279 aa).

An ADP-binding site is contributed by 159–166 (GVSRSGKT).

It belongs to the pyruvate, phosphate/water dikinase regulatory protein family. PSRP subfamily.

The catalysed reaction is [pyruvate, water dikinase] + ADP = [pyruvate, water dikinase]-phosphate + AMP + H(+). It carries out the reaction [pyruvate, water dikinase]-phosphate + phosphate + H(+) = [pyruvate, water dikinase] + diphosphate. Functionally, bifunctional serine/threonine kinase and phosphorylase involved in the regulation of the phosphoenolpyruvate synthase (PEPS) by catalyzing its phosphorylation/dephosphorylation. This Ralstonia nicotianae (strain ATCC BAA-1114 / GMI1000) (Ralstonia solanacearum) protein is Putative phosphoenolpyruvate synthase regulatory protein.